The primary structure comprises 268 residues: MRLIPLKTAQQVSKWAAKHIVDRINTFAPTAERPFVLGLPTGGTPLQTYKELIKLYQAEEVSFKYVVTFNMDEYVGLPKEHPESYHSFMYNNFFNHIDIQPQNINILDGNTDDHDEECRRYEEKIKSYGKINLFMGGVGVDGHIAFNEPASSLASRTRIKTLTEDTLIANSRFFDNDVTKVPKYALTIGVATLLDAEEVMLLVTGHNKALALQAGVEGNVNHFWTISALQLHRHAIFVCDEPATQELKVKTVKYFTELEQRAIHSVLD.

The active-site Proton acceptor; for enolization step is the Asp72. Catalysis depends on Asp141, which acts as the For ring-opening step. Residue His143 is the Proton acceptor; for ring-opening step of the active site. Catalysis depends on Glu148, which acts as the For ring-opening step.

The protein belongs to the glucosamine/galactosamine-6-phosphate isomerase family. NagB subfamily. Homohexamer.

The catalysed reaction is alpha-D-glucosamine 6-phosphate + H2O = beta-D-fructose 6-phosphate + NH4(+). It participates in amino-sugar metabolism; N-acetylneuraminate degradation; D-fructose 6-phosphate from N-acetylneuraminate: step 5/5. With respect to regulation, allosterically activated by N-acetylglucosamine 6-phosphate (GlcNAc6P). Its function is as follows. Catalyzes the reversible isomerization-deamination of glucosamine 6-phosphate (GlcN6P) to form fructose 6-phosphate (Fru6P) and ammonium ion. The polypeptide is Glucosamine-6-phosphate deaminase (Histophilus somni (strain 129Pt) (Haemophilus somnus)).